Consider the following 707-residue polypeptide: Zinc finger protein 60 (707 aa).

Residues 14-86 (VTFRDVAVDF…VKKETGRPSQ (73 aa)) enclose the KRAB domain. 19 C2H2-type zinc fingers span residues 173-195 (YKCKDCGKCFGCKSNLHQHESIH), 201-223 (YECKDCGKTFRLPQMLSRHQKSH), 229-251 (FECNICGKSFHLPTLLQYHKNIH), 257-282 (FECEECGKSFKSFNRISTLFQHRTIH), 288-310 (YKCNVCGKAFNRRSNLLQHQKIH), 316-338 (FHCKVCGKAFTVLAQLTRHENIH), 344-366 (FECKQCGKIFSNGSYLLRHYDTH), 372-394 (FECNICGKAFRLHLYLSEHQKTH), 400-422 (FKCKLCESAFRRKYQLSEHQRIH), 428-450 (YQCKDCWEFFRRRSNFIEHQSIH), 456-478 (FECKDCGKVFRLNIHLIRHQRFH), 484-506 (FECKECGKAFHFSSQLNNHKTSH), 512-534 (FECKECGKSFKRVSSLVEHRIIH), 540-562 (YKCNACGRAFNRRSNLMQHEKIH), 568-590 (FECKDCGKAFTVLAQLTRHQTIH), 596-618 (YECEQCGSAFRLPYQLTQHQRIH), 624-646 (FQCKECGRAFVRSTGLRIHERIH), 652-674 (FQCKECGEAFQYHYQFLGHFRIH), and 680-702 (YECSECGKYFTYGRDLKVHQSIH).

Belongs to the krueppel C2H2-type zinc-finger protein family. As to expression, expressed widely and evenly in most adult mouse tissues.

It is found in the nucleus. In terms of biological role, may have a role during differentiation processes. The polypeptide is Zinc finger protein 60 (Zfp60) (Mus musculus (Mouse)).